A 120-amino-acid chain; its full sequence is Prefoldin subunit beta (120 aa).

This sequence belongs to the prefoldin subunit beta family. Heterohexamer of two alpha and four beta subunits.

The protein resides in the cytoplasm. Molecular chaperone capable of stabilizing a range of proteins. Seems to fulfill an ATP-independent, HSP70-like function in archaeal de novo protein folding. The chain is Prefoldin subunit beta (pfdB) from Methanopyrus kandleri (strain AV19 / DSM 6324 / JCM 9639 / NBRC 100938).